Here is a 162-residue protein sequence, read N- to C-terminus: Cyclic pyranopterin monophosphate synthase (162 aa).

Substrate is bound by residues 79–81 and 117–118; these read LCH and ME. Asp132 is a catalytic residue.

The protein belongs to the MoaC family. In terms of assembly, homohexamer; trimer of dimers.

It carries out the reaction (8S)-3',8-cyclo-7,8-dihydroguanosine 5'-triphosphate = cyclic pyranopterin phosphate + diphosphate. It participates in cofactor biosynthesis; molybdopterin biosynthesis. Its function is as follows. Catalyzes the conversion of (8S)-3',8-cyclo-7,8-dihydroguanosine 5'-triphosphate to cyclic pyranopterin monophosphate (cPMP). In Bordetella avium (strain 197N), this protein is Cyclic pyranopterin monophosphate synthase.